Here is a 441-residue protein sequence, read N- to C-terminus: Ribosomal protein uS12 methylthiotransferase RimO (441 aa).

An MTTase N-terminal domain is found at 8–118 (PKIGFVSLGC…VLQHVHHYVP (111 aa)). Cys-17, Cys-53, Cys-82, Cys-150, Cys-154, and Cys-157 together coordinate [4Fe-4S] cluster. One can recognise a Radical SAM core domain in the interval 136-373 (LTPRHYAYLK…MQLQQQISAE (238 aa)). Positions 376 to 441 (QEKVGREILV…DEYDLWGSRV (66 aa)) constitute a TRAM domain.

This sequence belongs to the methylthiotransferase family. RimO subfamily. It depends on [4Fe-4S] cluster as a cofactor.

The protein localises to the cytoplasm. The catalysed reaction is L-aspartate(89)-[ribosomal protein uS12]-hydrogen + (sulfur carrier)-SH + AH2 + 2 S-adenosyl-L-methionine = 3-methylsulfanyl-L-aspartate(89)-[ribosomal protein uS12]-hydrogen + (sulfur carrier)-H + 5'-deoxyadenosine + L-methionine + A + S-adenosyl-L-homocysteine + 2 H(+). In terms of biological role, catalyzes the methylthiolation of an aspartic acid residue of ribosomal protein uS12. The chain is Ribosomal protein uS12 methylthiotransferase RimO from Salmonella agona (strain SL483).